The following is a 436-amino-acid chain: STITKVHARQIFDSRGNPTVEVEVTTDKGVFRAGVPSGASTGVHEALELRDGVKSDYLGKGVLKAVGNVNTIINEELVKANLSVVDQKAVDDFLIQLDGTENKEKLGANAILGVSLAVAKAGAAEKGVPFYVHIADLAGSKKPFVLPVPAFNVINGGSHAGNKLAMQEFMIMPTGAKSFSEAMKLGSEVYHTLKKVINEKYGQDATNVGDEGGFAPNIQDNQEGLELLVTAIEKAGYTGKIKVAMDCAASDFYKDGKYDLDFKNPNSDPSTYLTGQDLTDLYNSYAGKYPIVSIEDAFDQDDWENWAHMNASADYQLVGDDLTVTNPKRIATAVEKKACNALLLKVNQIGTLTESIQAALDSQKAGWGVMVSHRSGETEDTSIASIVVGLRTGQIKTGAPCRSERLAKYNELLRIEEELGDAAIYAGEHFRKAHDL.

2 residues coordinate substrate: H159 and E168. The Proton donor role is filled by E211. Mg(2+)-binding residues include D246, E295, and D320. Positions 295 and 320 each coordinate substrate. K345 acts as the Proton acceptor in catalysis. Substrate-binding positions include 372–375 (SHRS) and K396.

It belongs to the enolase family. As to quaternary structure, homodimer. It depends on Mg(2+) as a cofactor.

The protein resides in the cytoplasm. The enzyme catalyses (2R)-2-phosphoglycerate = phosphoenolpyruvate + H2O. It functions in the pathway carbohydrate degradation; glycolysis; pyruvate from D-glyceraldehyde 3-phosphate: step 4/5. The polypeptide is Enolase (Cunninghamella elegans).